The following is a 548-amino-acid chain: Chaperonin GroEL (548 aa).

ATP is bound by residues 30–33 (TLGP), Lys-51, 87–91 (DGTTT), Gly-415, 478–480 (NAA), and Asp-494.

This sequence belongs to the chaperonin (HSP60) family. In terms of assembly, forms a cylinder of 14 subunits composed of two heptameric rings stacked back-to-back. Interacts with the co-chaperonin GroES.

Its subcellular location is the cytoplasm. It catalyses the reaction ATP + H2O + a folded polypeptide = ADP + phosphate + an unfolded polypeptide.. In terms of biological role, together with its co-chaperonin GroES, plays an essential role in assisting protein folding. The GroEL-GroES system forms a nano-cage that allows encapsulation of the non-native substrate proteins and provides a physical environment optimized to promote and accelerate protein folding. This Janthinobacterium sp. (strain Marseille) (Minibacterium massiliensis) protein is Chaperonin GroEL.